The following is a 387-amino-acid chain: Putative protein FAM157C (387 aa).

3 disordered regions span residues 1-21, 182-226, and 329-353; these read MGPL…PLPK, TARP…GAEP, and RARD…TSSG.

The protein belongs to the FAM157 family.

The protein is Putative protein FAM157C (FAM157C) of Homo sapiens (Human).